Here is a 348-residue protein sequence, read N- to C-terminus: Flagellar P-ring protein (348 aa).

Positions 1–16 (MRVLTIFLLFMTSIFA) are cleaved as a signal peptide.

It belongs to the FlgI family. The basal body constitutes a major portion of the flagellar organelle and consists of four rings (L,P,S, and M) mounted on a central rod.

Its subcellular location is the periplasm. It localises to the bacterial flagellum basal body. In terms of biological role, assembles around the rod to form the L-ring and probably protects the motor/basal body from shearing forces during rotation. This chain is Flagellar P-ring protein, found in Campylobacter jejuni subsp. jejuni serotype O:6 (strain 81116 / NCTC 11828).